We begin with the raw amino-acid sequence, 460 residues long: 5-hydroxytryptamine receptor 2C (460 aa).

An N-terminal signal peptide occupies residues 1-32 (MVNLGNAVRSLLMHLIGLLVWQFDISISPVAA). The Extracellular portion of the chain corresponds to 33–56 (IVTDTFNSSDGGRLFQFPDGVQNW). The chain crosses the membrane as a helical span at residues 57-81 (PALSIVVIIIMTIGGNILVIMAVSM). Residues 82 to 87 (EKKLHN) are Cytoplasmic-facing. The chain crosses the membrane as a helical span at residues 88-112 (ATNYFLMSLAIADMLVGLLVMPLSL). Residues 113-129 (LAILYDYVWPLPRYLCP) are Extracellular-facing. An intrachain disulfide couples Cys128 to Cys208. A helical transmembrane segment spans residues 130-152 (VWISLDVLFSTASIMHLCAISLD). Residue Thr140 participates in ergotamine binding. The DRY motif; important for ligand-induced conformation changes motif lies at 152–154 (DRY). Over 153–168 (RYVAIRNPIEHSRFNS) the chain is Cytoplasmic. Residues 169–190 (RTKAIMKIAIVWAISIGVSVPI) form a helical membrane-spanning segment. The Extracellular segment spans residues 191 to 214 (PVIGLRDESKVFVNNTTCVLNDPN). Asn204 and Asn205 each carry an N-linked (GlcNAc...) asparagine glycan. Leu210 is an ergotamine binding site. A helical transmembrane segment spans residues 215–237 (FVLIGSFVAFFIPLTIMVITYFL). The Cytoplasmic segment spans residues 238 to 313 (TIYVLRRQTL…AINNEKKASK (76 aa)). The interval 276-301 (EEENAPNPNPDQKPRRKKKEKRPRGT) is disordered. A compositionally biased stretch (basic residues) spans 289–299 (PRRKKKEKRPR). A helical transmembrane segment spans residues 314–338 (VLGIVFFVFLIMWCPFFITNILSVL). Cys339 and Cys343 are joined by a disulfide. Residues 339–349 (CGKACNQKLME) lie on the Extracellular side of the membrane. Residues 350-372 (KLLNVFVWIGYVCSGINPLVYTL) traverse the membrane as a helical segment. The NPxxY motif; important for ligand-induced conformation changes and signaling signature appears at 366-370 (NPLVY). Residues 373–460 (FNKIYRRAFS…NVVSERISSV (88 aa)) are Cytoplasmic-facing. A PDZ-binding motif is present at residues 458–460 (SSV).

Belongs to the G-protein coupled receptor 1 family. Interacts with MPDZ. Interacts with ARRB2. Interacts with MPP3; this interaction stabilizes the receptor at the plasma membrane and prevents the desensitization of the HTR2C receptor-mediated calcium response.

It is found in the cell membrane. Functionally, G-protein coupled receptor for 5-hydroxytryptamine (serotonin). Also functions as a receptor for various drugs and psychoactive substances, including ergot alkaloid derivatives, 1-2,5,-dimethoxy-4-iodophenyl-2-aminopropane (DOI) and lysergic acid diethylamide (LSD). Ligand binding causes a conformation change that triggers signaling via guanine nucleotide-binding proteins (G proteins) and modulates the activity of downstream effectors. HTR2C is coupled to G(q)/G(11) G alpha proteins and activates phospholipase C-beta, releasing diacylglycerol (DAG) and inositol 1,4,5-trisphosphate (IP3) second messengers that modulate the activity of phosphatidylinositol 3-kinase and promote the release of Ca(2+) ions from intracellular stores, respectively. Beta-arrestin family members inhibit signaling via G proteins and mediate activation of alternative signaling pathways. Regulates neuronal activity via the activation of short transient receptor potential calcium channels in the brain, and thereby modulates the activation of pro-opiomelanocortin neurons and the release of CRH that then regulates the release of corticosterone. Plays a role in the regulation of appetite and eating behavior, responses to anxiogenic stimuli and stress. Plays a role in insulin sensitivity and glucose homeostasis. This is 5-hydroxytryptamine receptor 2C from Rattus norvegicus (Rat).